A 248-amino-acid chain; its full sequence is tRNA1(Val) (adenine(37)-N6)-methyltransferase (248 aa).

It belongs to the methyltransferase superfamily. tRNA (adenine-N(6)-)-methyltransferase family.

Its subcellular location is the cytoplasm. The enzyme catalyses adenosine(37) in tRNA1(Val) + S-adenosyl-L-methionine = N(6)-methyladenosine(37) in tRNA1(Val) + S-adenosyl-L-homocysteine + H(+). Functionally, specifically methylates the adenine in position 37 of tRNA(1)(Val) (anticodon cmo5UAC). The chain is tRNA1(Val) (adenine(37)-N6)-methyltransferase from Yersinia pseudotuberculosis serotype O:1b (strain IP 31758).